The chain runs to 279 residues: Phosphatidylglycerol--prolipoprotein diacylglyceryl transferase (279 aa).

The next 3 helical transmembrane spans lie at 22 to 42, 52 to 72, and 89 to 109; these read WYGI…QAAL, LIDI…IYFV, and IWHG…SGII. Arg-137 is an a 1,2-diacyl-sn-glycero-3-phospho-(1'-sn-glycerol) binding site. 2 helical membrane-spanning segments follow: residues 203-223 and 235-255; these read LGET…FVEA and IRVA…FVIY.

It belongs to the Lgt family.

Its subcellular location is the cell membrane. The catalysed reaction is L-cysteinyl-[prolipoprotein] + a 1,2-diacyl-sn-glycero-3-phospho-(1'-sn-glycerol) = an S-1,2-diacyl-sn-glyceryl-L-cysteinyl-[prolipoprotein] + sn-glycerol 1-phosphate + H(+). Its pathway is protein modification; lipoprotein biosynthesis (diacylglyceryl transfer). Its function is as follows. Catalyzes the transfer of the diacylglyceryl group from phosphatidylglycerol to the sulfhydryl group of the N-terminal cysteine of a prolipoprotein, the first step in the formation of mature lipoproteins. This is Phosphatidylglycerol--prolipoprotein diacylglyceryl transferase from Staphylococcus epidermidis (strain ATCC 12228 / FDA PCI 1200).